A 34-amino-acid chain; its full sequence is uncharacterized protein (34 aa).

Residues L10–I30 form a helical membrane-spanning segment.

It localises to the membrane. This is an uncharacterized protein from Escherichia coli O157:H7.